Consider the following 275-residue polypeptide: Two-component response regulator PprB (275 aa).

In terms of domain architecture, Response regulatory spans Ser-10–Glu-128. Asp-60 is modified (4-aspartylphosphate). Residues Ser-173–Gly-205 are disordered. One can recognise an HTH luxR-type domain in the interval Ser-200–Ala-265. Positions Asn-224–Ser-243 form a DNA-binding region, H-T-H motif.

Phosphorylated by PprA.

In terms of biological role, member of the two-component regulatory system PprA/PprB involved in biofilm formation by controlling the expression of many related genes including type IVb pili major subunit flp pilin, adhesin bapA or cupE fimbriae. Functions as a transcription regulator by direct binding to promoter regions. Negatively regulates its own transcription. The chain is Two-component response regulator PprB from Pseudomonas aeruginosa (strain ATCC 15692 / DSM 22644 / CIP 104116 / JCM 14847 / LMG 12228 / 1C / PRS 101 / PAO1).